A 117-amino-acid polypeptide reads, in one-letter code: Prefoldin subunit beta (117 aa).

The protein belongs to the prefoldin subunit beta family. In terms of assembly, heterohexamer of two alpha and four beta subunits.

The protein resides in the cytoplasm. Its function is as follows. Molecular chaperone capable of stabilizing a range of proteins. Seems to fulfill an ATP-independent, HSP70-like function in archaeal de novo protein folding. This is Prefoldin subunit beta from Methanosarcina mazei (strain ATCC BAA-159 / DSM 3647 / Goe1 / Go1 / JCM 11833 / OCM 88) (Methanosarcina frisia).